The following is a 78-amino-acid chain: Acyl carrier protein (78 aa).

In terms of domain architecture, Carrier spans 2-77 (STIEESVKSI…AAIDFIKESK (76 aa)). Ser37 is modified (O-(pantetheine 4'-phosphoryl)serine).

This sequence belongs to the acyl carrier protein (ACP) family. Post-translationally, 4'-phosphopantetheine is transferred from CoA to a specific serine of apo-ACP by AcpS. This modification is essential for activity because fatty acids are bound in thioester linkage to the sulfhydryl of the prosthetic group.

It is found in the cytoplasm. The protein operates within lipid metabolism; fatty acid biosynthesis. In terms of biological role, carrier of the growing fatty acid chain in fatty acid biosynthesis. The protein is Acyl carrier protein of Wigglesworthia glossinidia brevipalpis.